The sequence spans 495 residues: Maternal protein exuperantia-1 (495 aa).

Disordered stretches follow at residues 197 to 217 and 377 to 495; these read DESANKENEPENVNRNGSSND and TIKP…AATN. Polar residues-rich tracts occupy residues 207-216 and 398-414; these read ENVNRNGSSN and AASSKNGAMSSRSTSTE.

In terms of biological role, ensures the proper localization of the mRNA of the bicoid gene to the anterior regions of the oocyte thus playing a fundamental role in the establishment of the polarity of the oocyte. May bind the bcd mRNA. This chain is Maternal protein exuperantia-1 (exu1), found in Drosophila pseudoobscura pseudoobscura (Fruit fly).